Consider the following 186-residue polypeptide: Elongation factor P (186 aa).

It belongs to the elongation factor P family.

Its subcellular location is the cytoplasm. Its pathway is protein biosynthesis; polypeptide chain elongation. Involved in peptide bond synthesis. Stimulates efficient translation and peptide-bond synthesis on native or reconstituted 70S ribosomes in vitro. Probably functions indirectly by altering the affinity of the ribosome for aminoacyl-tRNA, thus increasing their reactivity as acceptors for peptidyl transferase. This chain is Elongation factor P, found in Prochlorococcus marinus (strain MIT 9215).